A 351-amino-acid chain; its full sequence is Translation initiation factor eIF2B subunit beta (351 aa).

It belongs to the eIF-2B alpha/beta/delta subunits family. In terms of assembly, component of the translation initiation factor 2B (eIF2B) complex which is a heterodecamer of two sets of five different subunits: alpha, beta, gamma, delta and epsilon. Subunits alpha, beta and delta comprise a regulatory subcomplex and subunits epsilon and gamma comprise a catalytic subcomplex. Within the complex, the hexameric regulatory complex resides at the center, with the two heterodimeric catalytic subcomplexes bound on opposite sides.

The protein resides in the cytoplasm. It localises to the cytosol. Its activity is regulated as follows. Activated by the chemical integrated stress response (ISR) inhibitor ISRIB which stimulates guanine nucleotide exchange factor activity for both phosphorylated and unphosphorylated eIF2. Functionally, acts as a component of the translation initiation factor 2B (eIF2B) complex, which catalyzes the exchange of GDP for GTP on eukaryotic initiation factor 2 (eIF2) gamma subunit. Its guanine nucleotide exchange factor activity is repressed when bound to eIF2 complex phosphorylated on the alpha subunit, thereby limiting the amount of methionyl-initiator methionine tRNA available to the ribosome and consequently global translation is repressed. The chain is Translation initiation factor eIF2B subunit beta (Eif2b2) from Mus musculus (Mouse).